The primary structure comprises 502 residues: Packaging protein 1 (502 aa).

The tract at residues 99-122 (EAMEGQNPTCSRHESAYPIQSQVS) is disordered. 226-233 (GPTGCGKS) is an ATP binding site. The segment at 495–502 (RYYHSKKK) is DNA-binding.

It belongs to the adenoviridae packaging protein 1 family. As to quaternary structure, homodimer. Part of a genome packaging complex composed of packaging proteins 1, 2 and 3; this complex specifically binds to the packaging sequence on the left end of viral genomic DNA and performs packaging of the viral genome. Interacts with protein 33K.

The protein resides in the virion. The protein localises to the host nucleus. It localises to the host nucleoplasm. It is found in the host nucleolus. Functionally, component of the packaging machinery which encapsidates the viral DNA into preformed capsids and transcriptional activator of the viral major late promoter (MLP). Binds, along with packaging proteins 2 and 3, to the specific packaging sequence on the left end of viral genomic DNA and displays ATPase activity thereby providing the power stroke of the packaging machinery. The activity of packaging protein IVa2 is stimulated by protein 33K which acts as a terminase. May be the protein that pumps DNA into the capsid powered by ATP hydrolysis. Specifically binds to the 5'-CG-3' nucleotides of the repeats making up the packaging sequence. Component of the DEF-A and DEF-B transcription factors that bind downstream elements of the major late promoter (MLP), and stimulate transcription from the MLP after initiation of viral DNA replication. DEF-A is a heterodimer packaging proteins 1 and 2 and DEF-B is a homodimer of packaging protein 1. The sequence is that of Packaging protein 1 from Canis lupus familiaris (Dog).